We begin with the raw amino-acid sequence, 189 residues long: GTP cyclohydrolase 1 (189 aa).

Residues Cys-79, His-82, and Cys-150 each coordinate Zn(2+).

This sequence belongs to the GTP cyclohydrolase I family. As to quaternary structure, toroid-shaped homodecamer, composed of two pentamers of five dimers.

The enzyme catalyses GTP + H2O = 7,8-dihydroneopterin 3'-triphosphate + formate + H(+). The protein operates within cofactor biosynthesis; 7,8-dihydroneopterin triphosphate biosynthesis; 7,8-dihydroneopterin triphosphate from GTP: step 1/1. The polypeptide is GTP cyclohydrolase 1 (Rickettsia massiliae (strain Mtu5)).